The following is a 179-amino-acid chain: Cytochrome b6-f complex iron-sulfur subunit (179 aa).

Residues 21–43 (LLTFGTVTGVALGALYPVVKYFI) traverse the membrane as a helical segment. The Rieske domain maps to 61–162 (GNDVSLSKFL…ANTVDDKIIL (102 aa)). Residues C108, H110, C126, and H129 each contribute to the [2Fe-2S] cluster site. C113 and C128 are joined by a disulfide.

It belongs to the Rieske iron-sulfur protein family. The 4 large subunits of the cytochrome b6-f complex are cytochrome b6, subunit IV (17 kDa polypeptide, PetD), cytochrome f and the Rieske protein, while the 4 small subunits are PetG, PetL, PetM and PetN. The complex functions as a dimer. [2Fe-2S] cluster serves as cofactor.

It is found in the cellular thylakoid membrane. The catalysed reaction is 2 oxidized [plastocyanin] + a plastoquinol + 2 H(+)(in) = 2 reduced [plastocyanin] + a plastoquinone + 4 H(+)(out). In terms of biological role, component of the cytochrome b6-f complex, which mediates electron transfer between photosystem II (PSII) and photosystem I (PSI), cyclic electron flow around PSI, and state transitions. This Desmonostoc sp. (strain PCC 7906) (Nostoc sp. (strain PCC 7906)) protein is Cytochrome b6-f complex iron-sulfur subunit.